A 792-amino-acid polypeptide reads, in one-letter code: Phenylalanine--tRNA ligase beta subunit (792 aa).

One can recognise a tRNA-binding domain in the interval 39 to 147 (GESLGQVVVA…DDAPVGQALA (109 aa)). A B5 domain is found at 400–475 (PQPARILLRR…RIHGYDRVPT (76 aa)). Mg(2+)-binding residues include Asp-453, Asp-459, Glu-462, and Asp-463. The FDX-ACB domain maps to 698–791 (SRFPSVRRDL…IEREHRARIR (94 aa)).

It belongs to the phenylalanyl-tRNA synthetase beta subunit family. Type 1 subfamily. Tetramer of two alpha and two beta subunits. Mg(2+) is required as a cofactor.

The protein localises to the cytoplasm. It carries out the reaction tRNA(Phe) + L-phenylalanine + ATP = L-phenylalanyl-tRNA(Phe) + AMP + diphosphate + H(+). This Xanthomonas oryzae pv. oryzae (strain KACC10331 / KXO85) protein is Phenylalanine--tRNA ligase beta subunit.